The sequence spans 126 residues: Cystatin-like protein (126 aa).

The Secondary area of contact motif lies at 72 to 76 (QVVAG). A disulfide bridge links Cys94 with Cys115.

Belongs to the cystatin family.

The protein is Cystatin-like protein (Cys) of Drosophila melanogaster (Fruit fly).